Consider the following 309-residue polypeptide: Peptidyl-prolyl cis-trans isomerase 9 (309 aa).

One can recognise a PPIase cyclophilin-type domain in the interval 8-173 (FLDISVDENL…AKVLISNCGE (166 aa)). 4 stretches are compositionally biased toward basic and acidic residues: residues 217–229 (NEKKHEMRNDKRR), 239–265 (RSHEKNRDYKKENRGDSSRSQPRRDEN), 280–289 (ERSATPEHWR), and 296–309 (WVHDSHKHPEEDLV). The interval 217–309 (NEKKHEMRND…SHKHPEEDLV (93 aa)) is disordered.

Belongs to the cyclophilin-type PPIase family. As to expression, co-expressed with pdi-1 in the syncytial hypodermis.

The enzyme catalyses [protein]-peptidylproline (omega=180) = [protein]-peptidylproline (omega=0). PPIases accelerate the folding of proteins. It catalyzes the cis-trans isomerization of proline imidic peptide bonds in oligopeptides. Thought to function as a catalyst in the folding and modification of cuticle collagens. The protein is Peptidyl-prolyl cis-trans isomerase 9 (cyn-9) of Caenorhabditis elegans.